Here is a 298-residue protein sequence, read N- to C-terminus: Tyrosine recombinase XerD (298 aa).

Positions 3-88 (ALDHPLIDQF…GLRGFFRYLL (86 aa)) constitute a Core-binding (CB) domain. The 184-residue stretch at 109-292 (PLPKSLSEAD…AKARLQQLHA (184 aa)) folds into the Tyr recombinase domain. Residues arginine 149, lysine 173, histidine 244, arginine 247, and histidine 270 contribute to the active site. The active-site O-(3'-phospho-DNA)-tyrosine intermediate is the tyrosine 279.

This sequence belongs to the 'phage' integrase family. XerD subfamily. Forms a cyclic heterotetrameric complex composed of two molecules of XerC and two molecules of XerD.

Its subcellular location is the cytoplasm. In terms of biological role, site-specific tyrosine recombinase, which acts by catalyzing the cutting and rejoining of the recombining DNA molecules. The XerC-XerD complex is essential to convert dimers of the bacterial chromosome into monomers to permit their segregation at cell division. It also contributes to the segregational stability of plasmids. The protein is Tyrosine recombinase XerD of Pseudomonas putida (strain ATCC 47054 / DSM 6125 / CFBP 8728 / NCIMB 11950 / KT2440).